A 215-amino-acid polypeptide reads, in one-letter code: Large ribosomal subunit protein uL3 (215 aa).

Residues 136–155 (GVSISHRSHGSTGQRQDPGK) are disordered. Glutamine 151 is modified (N5-methylglutamine).

It belongs to the universal ribosomal protein uL3 family. In terms of assembly, part of the 50S ribosomal subunit. Forms a cluster with proteins L14 and L19. In terms of processing, methylated by PrmB.

Its function is as follows. One of the primary rRNA binding proteins, it binds directly near the 3'-end of the 23S rRNA, where it nucleates assembly of the 50S subunit. This Rickettsia conorii (strain ATCC VR-613 / Malish 7) protein is Large ribosomal subunit protein uL3.